The sequence spans 239 residues: tRNA (guanine-N(7)-)-methyltransferase (239 aa).

Residues glutamate 69, glutamate 94, aspartate 121, and aspartate 144 each coordinate S-adenosyl-L-methionine. Residue aspartate 144 is part of the active site. Residue lysine 148 coordinates substrate. The interaction with RNA stretch occupies residues 150 to 155 (RHNKRR). Substrate is bound by residues aspartate 180 and 217-220 (TKFE).

It belongs to the class I-like SAM-binding methyltransferase superfamily. TrmB family. In terms of assembly, monomer.

The enzyme catalyses guanosine(46) in tRNA + S-adenosyl-L-methionine = N(7)-methylguanosine(46) in tRNA + S-adenosyl-L-homocysteine. Its pathway is tRNA modification; N(7)-methylguanine-tRNA biosynthesis. In terms of biological role, catalyzes the formation of N(7)-methylguanine at position 46 (m7G46) in tRNA. The polypeptide is tRNA (guanine-N(7)-)-methyltransferase (Salmonella typhimurium (strain LT2 / SGSC1412 / ATCC 700720)).